The primary structure comprises 712 residues: Eukaryotic translation initiation factor 3 subunit B (712 aa).

N-acetylmethionine is present on methionine 1. The RRM domain occupies 56-143; it reads NIIVVDHLPV…HIFAVNMFDD (88 aa).

It belongs to the eIF-3 subunit B family. In terms of assembly, component of the eukaryotic translation initiation factor 3 (eIF-3) complex, which is composed of at least 13 different subunits. Binds to the translation initiation factor TIF3H1.

The protein localises to the cytoplasm. RNA-binding component of the eukaryotic translation initiation factor 3 (eIF-3) complex, which is involved in protein synthesis of a specialized repertoire of mRNAs and, together with other initiation factors, stimulates binding of mRNA and methionyl-tRNAi to the 40S ribosome. The eIF-3 complex specifically targets and initiates translation of a subset of mRNAs involved in cell proliferation. The sequence is that of Eukaryotic translation initiation factor 3 subunit B (TIF3B1) from Arabidopsis thaliana (Mouse-ear cress).